The chain runs to 419 residues: 2-amino-3-ketobutyrate coenzyme A ligase, mitochondrial (419 aa).

The transit peptide at 1 to 21 (MWPGNAWRAALFWVPRGRRAQ) directs the protein to the mitochondrion. Lys-45 is modified (N6-acetyllysine; alternate). An N6-succinyllysine; alternate modification is found at Lys-45. 134-135 (CY) is a binding site for pyridoxal 5'-phosphate. His-159 contacts substrate. An N6-acetyllysine; alternate modification is found at Lys-187. Residue Lys-187 is modified to N6-succinyllysine; alternate. Residues Ser-206, 262-265 (TLGK), and 295-296 (SN) each bind pyridoxal 5'-phosphate. Lys-265 is subject to N6-(pyridoxal phosphate)lysine. An N6-succinyllysine mark is found at Lys-326 and Lys-368. An N6-acetyllysine; alternate modification is found at Lys-383. Lys-383 bears the N6-succinyllysine; alternate mark. Arg-389 is a binding site for substrate.

This sequence belongs to the class-II pyridoxal-phosphate-dependent aminotransferase family. Requires pyridoxal 5'-phosphate as cofactor. In terms of tissue distribution, strongly expressed in heart, brain, liver and pancreas. Also found in lung.

Its subcellular location is the mitochondrion. The protein localises to the nucleus. The catalysed reaction is glycine + acetyl-CoA = (2S)-2-amino-3-oxobutanoate + CoA. In terms of biological role, pyridoxal phosphate (PLP) dependent enzyme, which catalyzes the cleavage of 2-amino-3-oxobutanoate to glycine and acetyl-CoA. In Homo sapiens (Human), this protein is 2-amino-3-ketobutyrate coenzyme A ligase, mitochondrial.